Here is a 266-residue protein sequence, read N- to C-terminus: UPF0354 protein Lm4b_01619 (266 aa).

Belongs to the UPF0354 family.

This chain is UPF0354 protein Lm4b_01619, found in Listeria monocytogenes serotype 4b (strain CLIP80459).